We begin with the raw amino-acid sequence, 154 residues long: MAARLCCQLDPARDVLCLRPVGAESRGRPFSGPLGALSSSSPPAVPTDHGAHLSLRGLPVCAFSSAGPCALRFTSARRMETTVNAHQFLPKVLHKRTLGLSAMSTTDLEAYFKDCLFKDWEELGEELRLKVFVLGGCRHKLVCAPAPCNFFTSA.

Residues 68-117 are mitochondrial targeting sequence; it reads PCALRFTSARRMETTVNAHQFLPKVLHKRTLGLSAMSTTDLEAYFKDCLF.

The protein belongs to the orthohepadnavirus protein X family. May form homodimer. May interact with host CEBPA, CFLAR, CREB1, DDB1, E4F1, HBXIP, HSPD1/HSP60, NFKBIA, POLR2E and SMAD4. Interacts with host SMC5-SMC6 complex and induces its degradation. Interacts with host TRPC4AP; leading to prevent ubiquitination of TRPC4AP. Interacts with host PLSCR1; this interaction promotes ubiquitination and degradation of HBx and impairs HBx-mediated cell proliferation. In terms of processing, a fraction may be phosphorylated in insect cells and HepG2 cells, a human hepatoblastoma cell line. Phosphorylated in vitro by host protein kinase C or mitogen-activated protein kinase. N-acetylated in insect cells.

It is found in the host cytoplasm. It localises to the host nucleus. Its subcellular location is the host mitochondrion. In terms of biological role, multifunctional protein that plays a role in silencing host antiviral defenses and promoting viral transcription. Does not seem to be essential for HBV infection. May be directly involved in development of cirrhosis and liver cancer (hepatocellular carcinoma). Most of cytosolic activities involve modulation of cytosolic calcium. The effect on apoptosis is controversial depending on the cell types in which the studies have been conducted. May induce apoptosis by localizing in mitochondria and causing loss of mitochondrial membrane potential. May also modulate apoptosis by binding host CFLAR, a key regulator of the death-inducing signaling complex (DISC). Promotes viral transcription by using the host E3 ubiquitin ligase DDB1 to target the SMC5-SMC6 complex to proteasomal degradation. This host complex would otherwise bind to viral episomal DNA, and prevents its transcription. Moderately stimulates transcription of many different viral and cellular transcription elements. Promoters and enhancers stimulated by HBx contain DNA binding sites for NF-kappa-B, AP-1, AP-2, c-EBP, ATF/CREB, or the calcium-activated factor NF-AT. The protein is Protein X of Homo sapiens (Human).